The sequence spans 192 residues: HTH-type transcriptional repressor SCO4008 (192 aa).

The HTH tetR-type domain maps to 7–67 (EATKARIFEA…SVLEKKMLDL (61 aa)). The segment at residues 30–49 (RIDRIAAEARANKQLIYAYY) is a DNA-binding region (H-T-H motif).

As to quaternary structure, homodimer. Four dimers bind to the two operator sites.

With respect to regulation, binding of a wide range of cationic hydrophobic compounds to SCO4008 causes a decrease in DNA-binding, probably via allosteric conformational change of SCO4008. Its function is as follows. Probably regulates the expression of its own gene and the adjacent SCO4007 gene by binding to two operator sites in the SCO4007-SCO4008 intergenic region. The protein is HTH-type transcriptional repressor SCO4008 of Streptomyces coelicolor (strain ATCC BAA-471 / A3(2) / M145).